Reading from the N-terminus, the 560-residue chain is Chaperonin GroEL 2 (560 aa).

Residues 29–32 (TLGP), 86–90 (DGTTT), G413, 478–480 (NAA), and D494 each bind ATP.

The protein belongs to the chaperonin (HSP60) family. In terms of assembly, forms a cylinder of 14 subunits composed of two heptameric rings stacked back-to-back. Interacts with the co-chaperonin GroES.

The protein localises to the cytoplasm. The catalysed reaction is ATP + H2O + a folded polypeptide = ADP + phosphate + an unfolded polypeptide.. Its function is as follows. Together with its co-chaperonin GroES, plays an essential role in assisting protein folding. The GroEL-GroES system forms a nano-cage that allows encapsulation of the non-native substrate proteins and provides a physical environment optimized to promote and accelerate protein folding. The polypeptide is Chaperonin GroEL 2 (Trichormus variabilis (strain ATCC 29413 / PCC 7937) (Anabaena variabilis)).